The primary structure comprises 314 residues: Methionyl-tRNA formyltransferase (314 aa).

111–114 (SLLP) lines the (6S)-5,6,7,8-tetrahydrofolate pocket.

The protein belongs to the Fmt family.

The catalysed reaction is L-methionyl-tRNA(fMet) + (6R)-10-formyltetrahydrofolate = N-formyl-L-methionyl-tRNA(fMet) + (6S)-5,6,7,8-tetrahydrofolate + H(+). Its function is as follows. Attaches a formyl group to the free amino group of methionyl-tRNA(fMet). The formyl group appears to play a dual role in the initiator identity of N-formylmethionyl-tRNA by promoting its recognition by IF2 and preventing the misappropriation of this tRNA by the elongation apparatus. The sequence is that of Methionyl-tRNA formyltransferase from Chlorobium chlorochromatii (strain CaD3).